The chain runs to 329 residues: Probable carboxylesterase 8 (329 aa).

Residues 73–75 (HGG) carry the Involved in the stabilization of the negatively charged intermediate by the formation of the oxyanion hole motif. Residues Ser161, Asp264, and His294 contribute to the active site.

It belongs to the 'GDXG' lipolytic enzyme family. As to expression, expressed in leaves, stems, flowers and siliques.

It carries out the reaction a carboxylic ester + H2O = an alcohol + a carboxylate + H(+). Carboxylesterase acting on esters with varying acyl chain length. The protein is Probable carboxylesterase 8 (CXE8) of Arabidopsis thaliana (Mouse-ear cress).